The primary structure comprises 63 residues: Small ribosomal subunit protein eS17 (63 aa).

This sequence belongs to the eukaryotic ribosomal protein eS17 family.

This is Small ribosomal subunit protein eS17 from Methanococcus maripaludis (strain C6 / ATCC BAA-1332).